A 205-amino-acid polypeptide reads, in one-letter code: FAS-associated death domain protein (205 aa).

The region spanning 3–81 is the DED domain; the sequence is PFLVLLHSLS…RHDLLQRLDD (79 aa). Residues 97-181 enclose the Death domain; it reads LQVAFDIVCD…LVADLVEEAQ (85 aa). The interval 181 to 205 is disordered; the sequence is QESVSKSENMSPVLRDSTVSSSETP. S191 carries the phosphoserine modification.

Can self-associate. Component of the AIM2 PANoptosome complex, a multiprotein complex that drives inflammatory cell death (PANoptosis). Component of the death-induced signaling complex (DISC) composed of cell surface receptor FAS/CD95 or TNFRSF1A, adapter protein FADD and the CASP8 protease; recruitment of CASP8 to the complex is required for processing of CASP8 into the p18 and p10 subunits. Interacts (via death domain) with FAS (via death domain). Interacts directly (via DED domain) with NOL3 (via CARD domain); inhibits death-inducing signaling complex (DISC) assembly by inhibiting the increase in FAS-FADD binding induced by FAS activation. Interacts with CFLAR, PEA15 and MBD4. When phosphorylated, part of a complex containing HIPK3 and FAS. May interact with MAVS/IPS1. Interacts with MOCV v-CFLAR protein and PIDD1. Interacts with RIPK1 and TRADD. Interacts with stimulated TNFRSF10B. Interacts with DDX24.

It is found in the cytoplasm. Functionally, apoptotic adapter molecule that recruits caspases CASP8 or CASP10 to the activated FAS/CD95 or TNFRSF1A/TNFR-1 receptors. The resulting aggregate called the death-inducing signaling complex (DISC) performs CASP8 proteolytic activation. Active CASP8 initiates the subsequent cascade of caspases mediating apoptosis. Involved in interferon-mediated antiviral immune response, playing a role in the positive regulation of interferon signaling. This chain is FAS-associated death domain protein, found in Mus musculus (Mouse).